A 361-amino-acid chain; its full sequence is dTDP-glucose 4,6-dehydratase 1 (361 aa).

NAD(+)-binding positions include 11-12, 32-35, 58-59, 80-84, and T99; these read FI, DKLT, DI, and LAAES. S84 contacts substrate. T133 provides a ligand contact to substrate. Residue D134 is the Proton donor of the active site. Catalysis depends on proton acceptor residues E135 and Y167. Residue 167–171 participates in NAD(+) binding; sequence YSASK. A substrate-binding site is contributed by N196. N197 contacts NAD(+). Substrate-binding positions include 206-207, 222-224, R231, N266, and 296-300; these read KL, PIY, and DRPGH.

This sequence belongs to the NAD(P)-dependent epimerase/dehydratase family. dTDP-glucose dehydratase subfamily. In terms of assembly, homodimer. Requires NAD(+) as cofactor.

It catalyses the reaction dTDP-alpha-D-glucose = dTDP-4-dehydro-6-deoxy-alpha-D-glucose + H2O. It functions in the pathway carbohydrate biosynthesis; dTDP-L-rhamnose biosynthesis. It participates in bacterial outer membrane biogenesis; LPS O-antigen biosynthesis. In terms of biological role, catalyzes the dehydration of dTDP-D-glucose to form dTDP-6-deoxy-D-xylo-4-hexulose via a three-step process involving oxidation, dehydration and reduction. In Escherichia coli (strain K12), this protein is dTDP-glucose 4,6-dehydratase 1 (rfbB).